Here is a 376-residue protein sequence, read N- to C-terminus: Putative F-box protein At2g33200 (376 aa).

An F-box domain is found at 6 to 53 (YDWSKLCHDILRLILESLHYKDYHRARTVCSNWYTASTTCKRPLYPWR).

In Arabidopsis thaliana (Mouse-ear cress), this protein is Putative F-box protein At2g33200.